The primary structure comprises 365 residues: DNA replication and repair protein RecF (365 aa).

An ATP-binding site is contributed by 30 to 37 (GRNAQGKT).

This sequence belongs to the RecF family.

It localises to the cytoplasm. In terms of biological role, the RecF protein is involved in DNA metabolism; it is required for DNA replication and normal SOS inducibility. RecF binds preferentially to single-stranded, linear DNA. It also seems to bind ATP. The protein is DNA replication and repair protein RecF of Streptococcus pneumoniae (strain CGSP14).